The chain runs to 311 residues: ATP synthase subunit a (311 aa).

Transmembrane regions (helical) follow at residues 62-82 (AVHVDTLGWGIFLALVVGFFM), 123-143 (VAPMAITVFSWVFMMNLMDLI), 179-199 (VTVFILMLFFSVQQKGLWGFI), 213-233 (FWYFNLILIPFNFILETVALI), 253-273 (IFILIATLFSVGLLFGFLGGI), and 276-296 (FGWAVLHILVILIQAFVFMVL).

This sequence belongs to the ATPase A chain family. F-type ATPases have 2 components, CF(1) - the catalytic core - and CF(0) - the membrane proton channel. CF(1) has five subunits: alpha(3), beta(3), gamma(1), delta(1), epsilon(1). CF(0) has three main subunits: a(1), b(2) and c(9-12). The alpha and beta chains form an alternating ring which encloses part of the gamma chain. CF(1) is attached to CF(0) by a central stalk formed by the gamma and epsilon chains, while a peripheral stalk is formed by the delta and b chains.

It is found in the cell inner membrane. Functionally, key component of the proton channel; it plays a direct role in the translocation of protons across the membrane. In Teredinibacter turnerae (strain ATCC 39867 / T7901), this protein is ATP synthase subunit a.